Consider the following 428-residue polypeptide: MNFDVVIIGGGLAGLTCGIALQEQGKRCVIINNGQAAIDFSSGSMDLLSRLPSGQKVENVYQSLDELKLQAPEHPYSILGKDQVLAKAQQFEQLAQSLNLHLEGSTVQNHERITPLGGLRATWLSPNSVPTVKHLTALADKQVAILGIEGYHDFQPQLLADNLKQHSQFADYEFTIGYLNIPELDYLRQNSREFRSVNIAQLLEHKLSFQDLVQEIKQAAGNAKAVFLPACFGLDNQDFFNSLQQATGLALFELPTLPPSLLGIRQHRQLRSRFEQLGGMMMNGDRAVKAEFEGKNVARIFTTSHQEEPISADYFVLAAGSFFSNGLVAEFERVKEPVFDLDICGCKNFDSSDRFTWTNNRFAAPQPYQSAGVVINSACQVQKNGEVVSNLYAVGNVIGGFQGIEQGCGSGVAVVTALTVAEQIGGTK.

The protein belongs to the anaerobic G-3-P dehydrogenase subunit B family. As to quaternary structure, composed of a catalytic GlpA/B dimer and of membrane bound GlpC. FMN serves as cofactor.

The catalysed reaction is a quinone + sn-glycerol 3-phosphate = dihydroxyacetone phosphate + a quinol. It functions in the pathway polyol metabolism; glycerol degradation via glycerol kinase pathway; glycerone phosphate from sn-glycerol 3-phosphate (anaerobic route): step 1/1. Its function is as follows. Conversion of glycerol 3-phosphate to dihydroxyacetone. Uses fumarate or nitrate as electron acceptor. The sequence is that of Anaerobic glycerol-3-phosphate dehydrogenase subunit B from Actinobacillus pleuropneumoniae serotype 5b (strain L20).